The sequence spans 140 residues: Ribonuclease P protein component (140 aa).

Belongs to the RnpA family. In terms of assembly, consists of a catalytic RNA component (M1 or rnpB) and a protein subunit.

It catalyses the reaction Endonucleolytic cleavage of RNA, removing 5'-extranucleotides from tRNA precursor.. RNaseP catalyzes the removal of the 5'-leader sequence from pre-tRNA to produce the mature 5'-terminus. It can also cleave other RNA substrates such as 4.5S RNA. The protein component plays an auxiliary but essential role in vivo by binding to the 5'-leader sequence and broadening the substrate specificity of the ribozyme. This is Ribonuclease P protein component from Nostoc punctiforme (strain ATCC 29133 / PCC 73102).